Here is a 376-residue protein sequence, read N- to C-terminus: MASYPGHQHASAFDQAARSRGHSNRRTALRPRRQQEATEVRPEQKMPTLLRVYIDGPHGMGKTTTTQLLVALGSRDDIVYVPEPMTYWRVLGASETIANIYTTQHRLDQGEISAGDAAVVMTSAQITIGMPYAVTDAVLAPHIGGEAGSSHAPPPALTLIFDRHPIAALLCYPAARYLMGSMTPQAVLAFVALIPPTLPGTNIVLGALPEDRHIDRLAKRQRPGERLDLAMLAAIRRVYGLLANTVRYLQGGGSWREDWGQLSGTAVPPQGAEPQSNAGPRPHIGDTLFTLFRAPELLAPNGDLYNVFAWALDVLAKRLRPMHVFILDYDQSPAGCRDALLQLTSGMIQTHVTTPGSIPTICDLARTFAREMGEAN.

Residues 1 to 44 (MASYPGHQHASAFDQAARSRGHSNRRTALRPRRQQEATEVRPEQ) form a disordered region. Over residues 19–32 (SRGHSNRRTALRPR) the composition is skewed to basic residues. A compositionally biased stretch (basic and acidic residues) spans 33–44 (RQQEATEVRPEQ). An ATP-binding site is contributed by 56 to 63 (GPHGMGKT). The Proton acceptor role is filled by Glu83. 2 residues coordinate substrate: Tyr101 and Gln125. Arg216 contributes to the ATP binding site. Arg222 contacts substrate. The interval 260 to 280 (GQLSGTAVPPQGAEPQSNAGP) is disordered.

The protein belongs to the herpesviridae thymidine kinase family. Homodimer.

The catalysed reaction is thymidine + ATP = dTMP + ADP + H(+). In terms of biological role, catalyzes the transfer of the gamma-phospho group of ATP to thymidine to generate dTMP in the salvage pathway of pyrimidine synthesis. The dTMP serves as a substrate for DNA polymerase during viral DNA replication. Allows the virus to be reactivated and to grow in non-proliferative cells lacking a high concentration of phosphorylated nucleic acid precursors. The polypeptide is Thymidine kinase (Human herpesvirus 1 (strain HFEM) (HHV-1)).